The sequence spans 214 residues: MEPGLWLLLGLTVTSAAGLVPCPQSGDSGRASVSQGPPEAGSERGCEETVAGPGERIVSPTVALPAQPESAGQERAPGRSGKQEDKGLPAHHRPRRCTCFTYKDKECVYYCHLDIIWINTPEQTVPYGLSNYRESLRGKRSLGPVPESSQPSPWTRLRCTCMGADDKACAHFCARTRDVTSYSGRAERPAAEEMRETGGPRQRLMSRTDKAHRP.

Positions 1–16 are cleaved as a signal peptide; sequence MEPGLWLLLGLTVTSA. Residues 17–94 constitute a propeptide that is removed on maturation; the sequence is AGLVPCPQSG…DKGLPAHHRP (78 aa). A disordered region spans residues 24 to 91; sequence QSGDSGRASV…KQEDKGLPAH (68 aa). The segment covering 25–35 has biased composition (polar residues); it reads SGDSGRASVSQ. 2 disulfides stabilise this stretch: C97-C111 and C99-C107. Positions 118 to 214 are excised as a propeptide; that stretch reads INTPEQTVPY…MSRTDKAHRP (97 aa). The tract at residues 159 to 173 is endothelin-like; that stretch reads CTCMGADDKACAHFC. Residues 183 to 214 are disordered; it reads SGRAERPAAEEMRETGGPRQRLMSRTDKAHRP. Positions 185–198 are enriched in basic and acidic residues; sequence RAERPAAEEMRETG.

It belongs to the endothelin/sarafotoxin family.

The protein resides in the secreted. In terms of biological role, endothelins are endothelium-derived vasoconstrictor peptides. The protein is Endothelin-3 (Edn3) of Mus musculus (Mouse).